The sequence spans 244 residues: tRNA pseudouridine synthase A (244 aa).

Aspartate 55 functions as the Nucleophile in the catalytic mechanism. Position 113 (tyrosine 113) interacts with substrate.

It belongs to the tRNA pseudouridine synthase TruA family. As to quaternary structure, homodimer.

It catalyses the reaction uridine(38/39/40) in tRNA = pseudouridine(38/39/40) in tRNA. In terms of biological role, formation of pseudouridine at positions 38, 39 and 40 in the anticodon stem and loop of transfer RNAs. The sequence is that of tRNA pseudouridine synthase A from Phytoplasma mali (strain AT).